We begin with the raw amino-acid sequence, 137 residues long: uncharacterized protein (137 aa).

The tract at residues 67 to 87 (KSERQHQRVHHELPHDKPRQS) is disordered. The segment covering 70–85 (RQHQRVHHELPHDKPR) has biased composition (basic and acidic residues).

This is an uncharacterized protein from Human cytomegalovirus (strain AD169) (HHV-5).